A 673-amino-acid chain; its full sequence is NACHT, LRR and PYD domains-containing protein 10 (673 aa).

The Pyrin domain maps to 1–92 (MALARANSPQ…VDYLNQVCLN (92 aa)). In terms of domain architecture, NACHT spans 163–469 (PIVVMQGSAG…AMSFLVKEDQ (307 aa)). Residue 169 to 176 (GSAGTGKT) coordinates ATP. The interval 578–673 (SDKKKSVSVT…DGEMIDKMNG (96 aa)) is disordered. Positions 584 to 597 (VSVTSSFSSGKVQS) are enriched in low complexity. A compositionally biased stretch (basic and acidic residues) spans 633 to 648 (ASREKGHMEMNDKEDG). Over residues 649–658 (GVEEQEDEEG) the composition is skewed to acidic residues. Over residues 659–673 (QTLKKDGEMIDKMNG) the composition is skewed to basic and acidic residues.

It belongs to the NLRP family. In terms of assembly, oligomerizes. Interacts with PYCARD. Also interacts with CASP1 and IL1B. Interacts with NOD1 and components of the NOD1 signaling pathway including RIPK2, NR2C2/TAK1 and IKBKG/NEMO. As to expression, expressed in skin, tongue, heart, colon and several cell lines of hematopoietic and myocytic origin but not in kidney, skeletal muscle, spleen, liver, lung, thymus, brain or small intestine (at protein level).

The protein localises to the cytoplasm. The protein resides in the cell membrane. In terms of biological role, inhibits autoprocessing of CASP1, CASP1-dependent IL1B secretion, PYCARD aggregation and PYCARD-mediated apoptosis but not apoptosis induced by FAS or BID. Displays anti-inflammatory activity. Required for immunity against C.albicans infection. Involved in the innate immune response by contributing to pro-inflammatory cytokine release in response to invasive bacterial infection. Contributes to T-cell-mediated inflammatory responses in the skin. Plays a role in protection against periodontitis through its involvement in induction of IL1A via ERK activation in oral epithelial cells infected with periodontal pathogens. Exhibits both ATPase and GTPase activities. This Mus musculus (Mouse) protein is NACHT, LRR and PYD domains-containing protein 10 (Nlrp10).